The following is a 610-amino-acid chain: UvrABC system protein C (610 aa).

One can recognise a GIY-YIG domain in the interval 16 to 94; that stretch reads SQPGVYRMYD…IKLYQPRYNV (79 aa). The UVR domain occupies 204-239; that stretch reads DQVLTQLISRMETASQNLEFEEAARIRDQIQAVRRV.

It belongs to the UvrC family. As to quaternary structure, interacts with UvrB in an incision complex.

Its subcellular location is the cytoplasm. Functionally, the UvrABC repair system catalyzes the recognition and processing of DNA lesions. UvrC both incises the 5' and 3' sides of the lesion. The N-terminal half is responsible for the 3' incision and the C-terminal half is responsible for the 5' incision. The chain is UvrABC system protein C from Escherichia coli O45:K1 (strain S88 / ExPEC).